A 564-amino-acid chain; its full sequence is Alpha-amylase 3 (564 aa).

A signal peptide spans 1–21; sequence MFGVYFVLLFLSSALIHVANA. C51 and C59 are joined by a disulfide. Substrate-binding residues include N56 and W105. N143 provides a ligand contact to Ca(2+). A disulfide bridge connects residues C172 and C188. N181 carries an N-linked (GlcNAc...) asparagine glycan. Ca(2+) is bound at residue D198. R227 is a binding site for substrate. D229 serves as a coordination point for Ca(2+). The active-site Nucleophile is the D229. Residue 232-233 participates in substrate binding; sequence KM. The N-linked (GlcNAc...) asparagine glycan is linked to N235. Ca(2+) is bound at residue E253. Catalysis depends on E253, which acts as the Proton donor. A disulfide bridge links C263 with C306. 2 N-linked (GlcNAc...) asparagine glycosylation sites follow: N282 and N305. The substrate site is built by D322 and R369. 3 N-linked (GlcNAc...) asparagine glycosylation sites follow: N438, N447, and N498. Residue S538 is the site of GPI-anchor amidated serine attachment. A propeptide spans 539–564 (removed in mature form); sequence SSRLILSFKTLVFGLGVTAMLFVLFF.

This sequence belongs to the glycosyl hydrolase 13 family. Ca(2+) serves as cofactor. N-glycosylated.

The protein resides in the cell membrane. The enzyme catalyses Endohydrolysis of (1-&gt;4)-alpha-D-glucosidic linkages in polysaccharides containing three or more (1-&gt;4)-alpha-linked D-glucose units.. Has a role in cell wall biosynthesis where it is involved in maintaining cell wall strength and shape. The polypeptide is Alpha-amylase 3 (aah3) (Schizosaccharomyces pombe (strain 972 / ATCC 24843) (Fission yeast)).